We begin with the raw amino-acid sequence, 229 residues long: MTLAKPGSGAEFRLNNKANLKSRLVRDLSHAAGQEPEGSESLDPAMVAAVETLLRGIGEDPQREGLKKTPERVVAALKFLTSGYRQSLEDLINGAIFDEGHDEMVLLRDITLFSLCEHHLLPFIGKAHVAYIPRQKVVGLSKIARIVEMYSRRLQVQERLTRQIAEALMTMLDPYGVGVVIEATHMCMVMRGVQKPGSWTVTSSMVGVFQEDPRTREEFLSLIRHPSNL.

The Zn(2+) site is built by Cys-116, His-119, and Cys-187.

Belongs to the GTP cyclohydrolase I family. Toroid-shaped homodecamer, composed of two pentamers of five dimers.

The enzyme catalyses GTP + H2O = 7,8-dihydroneopterin 3'-triphosphate + formate + H(+). It participates in cofactor biosynthesis; 7,8-dihydroneopterin triphosphate biosynthesis; 7,8-dihydroneopterin triphosphate from GTP: step 1/1. The chain is GTP cyclohydrolase 1 from Synechococcus sp. (strain JA-3-3Ab) (Cyanobacteria bacterium Yellowstone A-Prime).